The sequence spans 445 residues: Trigger factor (445 aa).

Residues glycine 162 to threonine 247 form the PPIase FKBP-type domain.

The protein belongs to the FKBP-type PPIase family. Tig subfamily.

The protein resides in the cytoplasm. The catalysed reaction is [protein]-peptidylproline (omega=180) = [protein]-peptidylproline (omega=0). Functionally, involved in protein export. Acts as a chaperone by maintaining the newly synthesized protein in an open conformation. Functions as a peptidyl-prolyl cis-trans isomerase. This Rickettsia peacockii (strain Rustic) protein is Trigger factor.